We begin with the raw amino-acid sequence, 203 residues long: Leucyl/phenylalanyl-tRNA--protein transferase (203 aa).

This sequence belongs to the L/F-transferase family.

It is found in the cytoplasm. The enzyme catalyses N-terminal L-lysyl-[protein] + L-leucyl-tRNA(Leu) = N-terminal L-leucyl-L-lysyl-[protein] + tRNA(Leu) + H(+). It carries out the reaction N-terminal L-arginyl-[protein] + L-leucyl-tRNA(Leu) = N-terminal L-leucyl-L-arginyl-[protein] + tRNA(Leu) + H(+). The catalysed reaction is L-phenylalanyl-tRNA(Phe) + an N-terminal L-alpha-aminoacyl-[protein] = an N-terminal L-phenylalanyl-L-alpha-aminoacyl-[protein] + tRNA(Phe). Functions in the N-end rule pathway of protein degradation where it conjugates Leu, Phe and, less efficiently, Met from aminoacyl-tRNAs to the N-termini of proteins containing an N-terminal arginine or lysine. This is Leucyl/phenylalanyl-tRNA--protein transferase from Chelativorans sp. (strain BNC1).